The chain runs to 300 residues: Putative S-adenosyl-L-methionine-dependent methyltransferase MUL_0817 (300 aa).

S-adenosyl-L-methionine contacts are provided by residues Asp-127 and 156–157 (DL).

It belongs to the UPF0677 family.

Its function is as follows. Exhibits S-adenosyl-L-methionine-dependent methyltransferase activity. The chain is Putative S-adenosyl-L-methionine-dependent methyltransferase MUL_0817 from Mycobacterium ulcerans (strain Agy99).